A 126-amino-acid polypeptide reads, in one-letter code: Large ribosomal subunit protein bL17 (126 aa).

It belongs to the bacterial ribosomal protein bL17 family. In terms of assembly, part of the 50S ribosomal subunit. Contacts protein L32.

This is Large ribosomal subunit protein bL17 from Lactococcus lactis subsp. lactis (strain IL1403) (Streptococcus lactis).